A 212-amino-acid chain; its full sequence is MAIGLIGRKVGMTRIFTEDGASIPVTVIEIAANRVTQVRTLETDGYRALQVTTGTKKANRITKPEAGHFAKAGVEAGRGLWEVRLADDEGEGIEVGAELNVDIFADVAKVDVTGQSKGKGFQGGIKRWNFHAQDMTHGNSLAHRSNGSIGQNQTPGRVFKGKKMSGHMGAERVTTQNLDVVRVDAERNLLLVKGAVPGATNGNLIIKPAVKA.

Gln-153 carries the post-translational modification N5-methylglutamine.

Belongs to the universal ribosomal protein uL3 family. As to quaternary structure, part of the 50S ribosomal subunit. Forms a cluster with proteins L14 and L19. Methylated by PrmB.

One of the primary rRNA binding proteins, it binds directly near the 3'-end of the 23S rRNA, where it nucleates assembly of the 50S subunit. This Shewanella woodyi (strain ATCC 51908 / MS32) protein is Large ribosomal subunit protein uL3.